The chain runs to 457 residues: Acetylcholine receptor subunit alpha-1-A (457 aa).

An N-terminal signal peptide occupies residues 1 to 20 (MDFVLTRLILLFLAATIIYS). Over 21–230 (SEDESRLIND…ITYHFLLQRL (210 aa)) the chain is Extracellular. Cystine bridges form between Cys148-Cys162 and Cys212-Cys213. N-linked (GlcNAc...) asparagine glycosylation is present at Asn161. Helical transmembrane passes span 231 to 255 (PLYF…VFYL), 263 to 281 (ITLS…LVIV), and 297 to 316 (YMLF…VIVI). Residues 317–428 (NTHHRSPSTH…WKFVAMVLDH (112 aa)) are Cytoplasmic-facing. The chain crosses the membrane as a helical span at residues 429 to 447 (LLLAVFMIVCIIGTLAIFA).

Belongs to the ligand-gated ion channel (TC 1.A.9) family. Acetylcholine receptor (TC 1.A.9.1) subfamily. Alpha-1/CHRNA1 sub-subfamily. As to quaternary structure, one of the alpha chains that assemble within the acetylcholine receptor, a pentamer of two alpha chains, a beta, a delta, and a gamma or epsilon chains. Oocytes.

It is found in the postsynaptic cell membrane. It localises to the cell membrane. It catalyses the reaction K(+)(in) = K(+)(out). It carries out the reaction Na(+)(in) = Na(+)(out). Its function is as follows. Upon acetylcholine binding, the AChR responds by an extensive change in conformation that affects all subunits and leads to opening of an ion-conducting channel across the plasma membrane. This Xenopus laevis (African clawed frog) protein is Acetylcholine receptor subunit alpha-1-A (chrna1-a).